We begin with the raw amino-acid sequence, 374 residues long: Tryptophan--tRNA ligase (374 aa).

The short motif at 81 to 89 (PSGPVHIGH) is the 'HIGH' region element. Positions 258-262 (KMSAS) match the 'KMSKS' region motif.

The protein belongs to the class-I aminoacyl-tRNA synthetase family.

It localises to the cytoplasm. The catalysed reaction is tRNA(Trp) + L-tryptophan + ATP = L-tryptophyl-tRNA(Trp) + AMP + diphosphate + H(+). The sequence is that of Tryptophan--tRNA ligase from Pyrobaculum arsenaticum (strain DSM 13514 / JCM 11321 / PZ6).